The following is a 501-amino-acid chain: MAEAAARILEALPAVCEYRWSCKDASKRFTVVNPATGEPITVVQAGNLDTVQGAIQASHRAFESWRWKTRQERSLYLLQAADELQKHSHELAVLLCLENGKPVKDASFDVGFLVQVFRYFGSIVDKLPSEFFDQGSIYSSVIYEPHGVCVGILPFNWPPVHAGGKLAPCLAAGNTMVLKPGEQAPLTLMRIVEILQSVFPADVVQAVPGLGPEIPQALINHPLVKMVSLTGSTASGSQAAQTAAVTLTPTVLELGGKNAFVVFEDADLELVVRDAIDGAFFNKGESCTAASRILVHKDLYPTLVSRLTAAVKKLRTGDGLDETTHIGPVVSRERQQEVLSYIEQGKREGATLAAQGDPPTAGRLSGGFFVPPTLFTDVTADMTIAQREIFGPVVTVGSFETEEEAVKTVNSSQYGLFAGVYSSDFTRAMRVTRKLDVGVVLVNNYFRALLGTPFGGVKDSGYGREHWIGTLREWSRVKNVRFPSGLSPIPAWGGAVDVCKL.

NAD(+) is bound at residue 231–236 (GSTASG). Catalysis depends on residues Glu-253 and Cys-287.

Belongs to the aldehyde dehydrogenase family.

The catalysed reaction is an aldehyde + NAD(+) + H2O = a carboxylate + NADH + 2 H(+). It participates in mycotoxin biosynthesis. Aldehyde dehydrogenase; part of the gene cluster that mediates the biosynthesis of the mycotoxin citrinin, a hepato-nephrotoxic compound to humans due to inhibition of respiration complex III. The pathway begins with the synthesis of a keto-aldehyde intermediate by the citrinin PKS (pksCT) from successive condensations of 4 malonyl-CoA units, presumably with a simple acetyl-CoA starter unit. Release of the keto-aldehyde intermediate is consistent with the presence of the C-terminal reductive release domain. Mp11 collaborates with pksCT by catalyzing the hydrolysis of ACP-bound acyl intermediates to free the ACP from stalled intermediates. Mpl2 then catalyzes the oxidation of the C-12 methyl of the ketone intermediate to an alcohol intermediate which is further oxidized by the oxidoreductase mpl7 to produce a bisaldehyde intermediate. The fourth catalytic step is catalyzed by the mpl4 aldehyde dehydrogenase. The final transformation is the reduction of C-3 by mpl6 to provide the chemically stable citrinin nucleus. This chain is Aldehyde dehydrogenase mpl4, found in Monascus purpureus (Red mold).